The primary structure comprises 1339 residues: Aldehyde oxidase 1 (1339 aa).

The 2Fe-2S ferredoxin-type domain maps to 5–92 (SELLFYVNGR…GAAVTTVEGI (88 aa)). Positions 44, 49, 52, and 74 each coordinate [2Fe-2S] cluster. Gln113 is a binding site for Mo-molybdopterin. 4 residues coordinate [2Fe-2S] cluster: Cys114, Cys117, Cys149, and Cys151. Position 151 (Cys151) interacts with Mo-molybdopterin. One can recognise an FAD-binding PCMH-type domain in the interval 236–421 (FGSDRMTWIS…ISVNIPYSRK (186 aa)). FAD is bound by residues 264–271 (VVMGNTSV), Ala345, Ser354, His358, Asp367, and Leu411. Mo-molybdopterin contacts are provided by residues 807–808 (AF) and Met1048. The residue at position 1069 (Ser1069) is a Phosphoserine. Mo-molybdopterin is bound by residues 1089–1092 (GSVV), Gln1204, and Leu1269. The Proton acceptor; for azaheterocycle hydroxylase activity role is filled by Glu1271.

It belongs to the xanthine dehydrogenase family. In terms of assembly, homodimer. [2Fe-2S] cluster is required as a cofactor. The cofactor is FAD. Mo-molybdopterin serves as cofactor. The N-terminus is blocked. Expressed at high levels in liver, lung and spleen. Also expressed in kindey, eye, testis, duodenum, esophagus and thymus (at protein level).

It is found in the cytoplasm. The enzyme catalyses an aldehyde + O2 + H2O = a carboxylate + H2O2 + H(+). It carries out the reaction retinal + O2 + H2O = retinoate + H2O2 + H(+). Its function is as follows. Oxidase with broad substrate specificity, oxidizing aromatic azaheterocycles, such as N1-methylnicotinamide, N-methylphthalazinium and phthalazine, as well as aldehydes, such as benzaldehyde, retinal, pyridoxal, and vanillin. Plays a key role in the metabolism of xenobiotics and drugs containing aromatic azaheterocyclic substituents. Is probably involved in the regulation of reactive oxygen species homeostasis. May be a prominent source of superoxide generation via the one-electron reduction of molecular oxygen. May also catalyze nitric oxide (NO) production via the reduction of nitrite to NO with NADH or aldehyde as electron donor. May play a role in adipogenesis. This Bos taurus (Bovine) protein is Aldehyde oxidase 1.